A 138-amino-acid polypeptide reads, in one-letter code: MSLNRHMIREEAFQVLFALQSDSEADIQTVYEAIPHHDEKQIPPYLLTLVNGVREHQDQLDEQINDLLASGWTINRLAKPDLVILRLALFEIQYAENVPTVVAINEALELTKTFSSDKSRKFINGALGKFEKQVNENN.

It belongs to the NusB family.

In terms of biological role, involved in transcription antitermination. Required for transcription of ribosomal RNA (rRNA) genes. Binds specifically to the boxA antiterminator sequence of the ribosomal RNA (rrn) operons. This is Transcription antitermination protein NusB from Limosilactobacillus reuteri (strain DSM 20016) (Lactobacillus reuteri).